We begin with the raw amino-acid sequence, 195 residues long: Imidazoleglycerol-phosphate dehydratase (195 aa).

Belongs to the imidazoleglycerol-phosphate dehydratase family.

It localises to the cytoplasm. It carries out the reaction D-erythro-1-(imidazol-4-yl)glycerol 3-phosphate = 3-(imidazol-4-yl)-2-oxopropyl phosphate + H2O. The protein operates within amino-acid biosynthesis; L-histidine biosynthesis; L-histidine from 5-phospho-alpha-D-ribose 1-diphosphate: step 6/9. The sequence is that of Imidazoleglycerol-phosphate dehydratase from Cereibacter sphaeroides (strain ATCC 17029 / ATH 2.4.9) (Rhodobacter sphaeroides).